Here is a 216-residue protein sequence, read N- to C-terminus: Trimethylamine corrinoid protein 1 (216 aa).

In terms of domain architecture, B12-binding N-terminal spans 1 to 92; the sequence is MASKEEIIAK…EMEKRKSETK (92 aa). Residues 94–216 enclose the B12-binding domain; it reads LGTVVIGTIE…VVSKVRAVLL (123 aa). Position 107 (His107) interacts with methylcob(III)alamin.

Belongs to the methylamine corrinoid protein family. Can form a complex with MttB.

The protein operates within one-carbon metabolism; methanogenesis from trimethylamine. Its function is as follows. Acts probably as a methyl group carrier between MttB and either MtbA or MtaA. This is Trimethylamine corrinoid protein 1 (mttC1) from Methanosarcina acetivorans (strain ATCC 35395 / DSM 2834 / JCM 12185 / C2A).